Consider the following 260-residue polypeptide: Ribosomal RNA small subunit methyltransferase J (260 aa).

S-adenosyl-L-methionine is bound by residues 125–126 (ER) and Asp179. Residues 234–260 (IDGPKPSHALDGKSSRYDIYPKKALKP) are disordered. The segment covering 241–254 (HALDGKSSRYDIYP) has biased composition (basic and acidic residues).

It belongs to the methyltransferase superfamily. RsmJ family.

The protein localises to the cytoplasm. The catalysed reaction is guanosine(1516) in 16S rRNA + S-adenosyl-L-methionine = N(2)-methylguanosine(1516) in 16S rRNA + S-adenosyl-L-homocysteine + H(+). In terms of biological role, specifically methylates the guanosine in position 1516 of 16S rRNA. The protein is Ribosomal RNA small subunit methyltransferase J of Pseudomonas fluorescens (strain SBW25).